The chain runs to 221 residues: Cyclin-U3-1 (221 aa).

This sequence belongs to the cyclin family. Cyclin U/P subfamily. Interacts with CDKA-1 and CDKB1-1. Expressed in roots, stems and flowers. Expressed in the shoot apex, leaf primordia and young leaves.

In Arabidopsis thaliana (Mouse-ear cress), this protein is Cyclin-U3-1 (CYCU3-1).